We begin with the raw amino-acid sequence, 1634 residues long: Probable serine/threonine-protein kinase DDB_G0282895 (1634 aa).

An MORN 1 repeat occupies tyrosine 40 to tyrosine 63. The tract at residues glutamine 84–asparagine 131 is disordered. The span at lysine 89–proline 109 shows a compositional bias: low complexity. The segment covering isoleucine 110–glutamine 119 has biased composition (polar residues). Positions asparagine 120–asparagine 131 are enriched in low complexity. The stretch at tyrosine 169–serine 191 is one MORN 2 repeat. Low complexity-rich tracts occupy residues serine 273–threonine 292 and serine 318–serine 339. Disordered stretches follow at residues serine 273–glutamine 367, threonine 658–valine 750, and serine 783–glutamine 816. The span at glycine 340–serine 351 shows a compositional bias: polar residues. Composition is skewed to low complexity over residues glutamine 352–glutamine 367, threonine 658–threonine 688, and proline 703–serine 715. Residues aspartate 716–serine 732 are compositionally biased toward polar residues. Over residues asparagine 787 to asparagine 813 the composition is skewed to low complexity. Residues isoleucine 1255–tyrosine 1275 form a helical membrane-spanning segment. Residues leucine 1377–cysteine 1634 enclose the Protein kinase domain. ATP contacts are provided by residues leucine 1383–valine 1391 and lysine 1404. Aspartate 1500 functions as the Proton acceptor in the catalytic mechanism.

Belongs to the protein kinase superfamily. TKL Ser/Thr protein kinase family.

The protein localises to the membrane. The catalysed reaction is L-seryl-[protein] + ATP = O-phospho-L-seryl-[protein] + ADP + H(+). It catalyses the reaction L-threonyl-[protein] + ATP = O-phospho-L-threonyl-[protein] + ADP + H(+). The polypeptide is Probable serine/threonine-protein kinase DDB_G0282895 (Dictyostelium discoideum (Social amoeba)).